The following is a 723-amino-acid chain: E3 ubiquitin-protein ligase LRSAM1 (723 aa).

LRR repeat units follow at residues 30–51 (ADDILDISKCELSEIPFGAFAT), 56–77 (QKKVLIVHTNHLTSLLPKSCSL), 82–103 (TIKVLDLHDNQLTALPDDLGQL), 105–127 (ALQVLNVERNQLMQLPRSIGNLT), 128–149 (QLQTLNVKDNKLKELPDTVGEL), and 151–172 (SLRTLNISGNEIQRLPQMLAHV). The residue at position 234 (S234) is a Phosphoserine. 2 coiled-coil regions span residues 254 to 380 (SDYE…TESL) and 510 to 562 (ALSS…KPLS). The interval 282–314 (TQLLQQSSSQKDEILQTVKEEQSRLEQGLSEHQ) is disordered. Positions 291 to 314 (QKDEILQTVKEEQSRLEQGLSEHQ) are enriched in basic and acidic residues. The SAM domain occupies 569 to 632 (GMERQLVALL…LRRVQELLDA (64 aa)). At S604 the chain carries Phosphoserine. The segment at 642-665 (PMGEVVTPTAPQEPPESVRPSAPP) is disordered. Short sequence motifs (PTAP motif) lie at residues 649-652 (PTAP) and 661-664 (PSAP). An RING-type zinc finger spans residues 675–710 (CVVCLEREAQMIFLNCGHVCCCQQCCQPLRTCPLCR).

As to quaternary structure, interacts with TSG101. Interacts with PHF23. Interacts with FUS. Ubiquitination promoted by PHF23 leads to proteasomal degradation. As to expression, highly expressed in adult spinal cord motoneurons as well as in fetal spinal cord and muscle tissue.

It localises to the cytoplasm. It carries out the reaction S-ubiquitinyl-[E2 ubiquitin-conjugating enzyme]-L-cysteine + [acceptor protein]-L-lysine = [E2 ubiquitin-conjugating enzyme]-L-cysteine + N(6)-ubiquitinyl-[acceptor protein]-L-lysine.. The protein operates within protein modification; protein ubiquitination. E3 ubiquitin-protein ligase that mediates monoubiquitination of TSG101 at multiple sites, leading to inactivate the ability of TSG101 to sort endocytic (EGF receptors) and exocytic (HIV-1 viral proteins) cargos. Bacterial recognition protein that defends the cytoplasm from invasive pathogens. Localizes to several intracellular bacterial pathogens and generates the bacteria-associated ubiquitin signal leading to autophagy-mediated intracellular bacteria degradation (xenophagy). This is E3 ubiquitin-protein ligase LRSAM1 from Homo sapiens (Human).